Reading from the N-terminus, the 91-residue chain is Large ribosomal subunit protein uL23c (91 aa).

Belongs to the universal ribosomal protein uL23 family. As to quaternary structure, part of the 50S ribosomal subunit.

It localises to the plastid. It is found in the chloroplast. Its function is as follows. Binds to 23S rRNA. This Marchantia polymorpha (Common liverwort) protein is Large ribosomal subunit protein uL23c (rpl23).